The following is a 460-amino-acid chain: Ribulose bisphosphate carboxylase (460 aa).

Substrate is bound at residue asparagine 112. The active-site Proton acceptor is lysine 167. Lysine 169 provides a ligand contact to substrate. Mg(2+)-binding residues include lysine 192, aspartate 194, and glutamate 195. Lysine 192 carries the N6-carboxylysine modification. Histidine 288 (proton acceptor) is an active-site residue. Substrate is bound by residues arginine 289, histidine 322, and serine 369.

Belongs to the RuBisCO large chain family. Type II subfamily. In terms of assembly, homodimer. Mg(2+) serves as cofactor.

The enzyme catalyses 2 (2R)-3-phosphoglycerate + 2 H(+) = D-ribulose 1,5-bisphosphate + CO2 + H2O. It carries out the reaction D-ribulose 1,5-bisphosphate + O2 = 2-phosphoglycolate + (2R)-3-phosphoglycerate + 2 H(+). RuBisCO catalyzes two reactions: the carboxylation of D-ribulose 1,5-bisphosphate, the primary event in carbon dioxide fixation, as well as the oxidative fragmentation of the pentose substrate. Both reactions occur simultaneously and in competition at the same active site. The chain is Ribulose bisphosphate carboxylase from Rhodopseudomonas palustris (strain BisA53).